The primary structure comprises 257 residues: UPF0246 protein VCM66_2278 (257 aa).

Belongs to the UPF0246 family.

In Vibrio cholerae serotype O1 (strain M66-2), this protein is UPF0246 protein VCM66_2278.